The following is a 1088-amino-acid chain: RNA-directed RNA polymerase (1088 aa).

The region spanning 501 to 687 (LSYGDVTRFL…AKRYIAGGKI (187 aa)) is the RdRp catalytic domain.

It belongs to the reoviridae RNA-directed RNA polymerase family. As to quaternary structure, interacts with VP3 (Potential). Interacts with VP2; this interaction activates VP1. Interacts with NSP5; this interaction is probably necessary for the formation of functional virus factories. Interacts with NSP2; this interaction is weak. The cofactor is Mg(2+).

It localises to the virion. The enzyme catalyses RNA(n) + a ribonucleoside 5'-triphosphate = RNA(n+1) + diphosphate. RNA-directed RNA polymerase that is involved in both transcription and genome replication. Together with VP3 capping enzyme, forms an enzyme complex positioned near the channels situated at each of the five-fold vertices of the core. Following infection, the outermost layer of the virus is lost, leaving a double-layered particle (DLP) made up of the core and VP6 shell. VP1 then catalyzes the transcription of fully conservative plus-strand genomic RNAs that are extruded through the DLP's channels into the cytoplasm where they function as mRNAs for translation of viral proteins. One copy of each of the viral (+)RNAs is also recruited during core assembly, together with newly synthesized polymerase complexes and VP2. The polymerase of these novo-formed particles catalyzes the synthesis of complementary minus-strands leading to dsRNA formation. To do so, the polymerase specifically recognizes and binds 4 bases 5'-UGUG-3' in the conserved 3'-sequence of plus-strand RNA templates. VP2 presumably activates the autoinhibited VP1-RNA complex to coordinate packaging and genome replication. Once dsRNA synthesis is complete, the polymerase switches to the transcriptional mode, thus providing secondary transcription. The protein is RNA-directed RNA polymerase of Homo sapiens (Human).